A 1024-amino-acid polypeptide reads, in one-letter code: Beta-galactosidase (1024 aa).

Residues Asn-100 and Asp-198 each coordinate substrate. Asp-198 serves as a coordination point for Na(+). Mg(2+) contacts are provided by Glu-414, His-416, and Glu-459. Substrate contacts are provided by residues Glu-459 and 535–538 (EYAH). Glu-459 serves as the catalytic Proton donor. The Nucleophile role is filled by Glu-535. Asn-595 is a Mg(2+) binding site. Residues Phe-599 and Asn-602 each contribute to the Na(+) site. Residues Asn-602 and Trp-995 each contribute to the substrate site.

This sequence belongs to the glycosyl hydrolase 2 family. In terms of assembly, homotetramer. Requires Mg(2+) as cofactor. Na(+) serves as cofactor.

The catalysed reaction is Hydrolysis of terminal non-reducing beta-D-galactose residues in beta-D-galactosides.. The protein is Beta-galactosidase of Vibrio cholerae serotype O1 (strain ATCC 39541 / Classical Ogawa 395 / O395).